The chain runs to 134 residues: Cytochrome b5 (134 aa).

At Ala-2 the chain carries N-acetylalanine. N6-acetyllysine occurs at positions 7, 10, and 19. Positions 9–85 (VKYYTLEEIQ…SKTFIIGELH (77 aa)) constitute a Cytochrome b5 heme-binding domain. The heme site is built by His-44 and His-68. The chain crosses the membrane as a helical span at residues 109–131 (WWTNWVIPAISALVVSLMYHFYT).

Belongs to the cytochrome b5 family.

The protein localises to the endoplasmic reticulum membrane. The protein resides in the microsome membrane. Its subcellular location is the cytoplasm. Functionally, cytochrome b5 is a membrane-bound hemoprotein functioning as an electron carrier for several membrane-bound oxygenases. This is Cytochrome b5 (CYB5A) from Sus scrofa (Pig).